The following is a 359-amino-acid chain: Peptide chain release factor 1 (359 aa).

Position 236 is an N5-methylglutamine (Gln-236).

This sequence belongs to the prokaryotic/mitochondrial release factor family. Methylated by PrmC. Methylation increases the termination efficiency of RF1.

The protein localises to the cytoplasm. In terms of biological role, peptide chain release factor 1 directs the termination of translation in response to the peptide chain termination codons UAG and UAA. The protein is Peptide chain release factor 1 of Streptococcus agalactiae serotype Ia (strain ATCC 27591 / A909 / CDC SS700).